The sequence spans 338 residues: Probable family 20 transposase (338 aa).

Belongs to the transposase 20 family.

Functionally, required for the transposition of an insertion element. The polypeptide is Probable family 20 transposase (Pseudomonas aeruginosa (strain ATCC 15692 / DSM 22644 / CIP 104116 / JCM 14847 / LMG 12228 / 1C / PRS 101 / PAO1)).